The primary structure comprises 75 residues: MNITKRYVVIFFLVMLTKSLSNSDVLVSSVIETSKNDVCFIPCTRRYGDWECYDDCLGKNFNDGGCVDGRCCCKK.

An N-terminal signal peptide occupies residues 1 to 23; that stretch reads MNITKRYVVIFFLVMLTKSLSNS. Cystine bridges form between C39-C73, C43-C66, C52-C71, and C56-C72.

It belongs to the DEFL family.

The protein resides in the secreted. This Arabidopsis thaliana (Mouse-ear cress) protein is Defensin-like protein 58.